We begin with the raw amino-acid sequence, 139 residues long: Small ribosomal subunit protein bS6 (139 aa).

Over residues Lys114–Glu133 the composition is skewed to basic and acidic residues. Positions Lys114–Glu139 are disordered.

It belongs to the bacterial ribosomal protein bS6 family.

Its function is as follows. Binds together with bS18 to 16S ribosomal RNA. The sequence is that of Small ribosomal subunit protein bS6 from Campylobacter concisus (strain 13826).